Reading from the N-terminus, the 1291-residue chain is 1-phosphatidylinositol 4,5-bisphosphate phosphodiesterase gamma-1 (1291 aa).

At alanine 2 the chain carries N-acetylalanine. In terms of domain architecture, PH 1 spans 27-142 (RSLEVGTVMT…WIRGLTWLME (116 aa)). The region spanning 152–187 (QIERWLRKQFYSVDRNREDRISAKDLKNMLSQVNYR) is the EF-hand domain. Ca(2+) is bound by residues aspartate 165, asparagine 167, glutamate 169, arginine 171, and aspartate 176. In terms of domain architecture, PI-PLC X-box spans 320 to 464 (DTMNNPLSHY…LKRKILIKHK (145 aa)). Catalysis depends on residues histidine 335 and histidine 380. The PH 2; first part domain maps to 489–523 (SIKNGILYLEDPVNHEWYPHYFVLTSSKIYYSEET). Tyrosine 506 carries the phosphotyrosine modification. Residues 522-544 (ETSSDQGNEDEEEPKEASGSTEL) are disordered. SH2 domains lie at 550 to 657 (WFHG…SEPV) and 668 to 756 (WYHA…RYPI). Tyrosine 771 carries the post-translational modification Phosphotyrosine; by SYK. Phosphotyrosine occurs at positions 775 and 783. Position 783 is a phosphotyrosine; by ITK, SYK and TXK (tyrosine 783). An SH3 domain is found at 791–851 (TFKCAVKALF…PSNYVEEMVS (61 aa)). Residues 895-931 (FVFSISMASVAHWSLDVAADSQEELQDWVKKIREVAQ) form the PH 2; second part domain. In terms of domain architecture, PI-PLC Y-box spans 953–1070 (LSELVVYCRP…GYVLQPSVMR (118 aa)). The residue at position 977 (tyrosine 977) is a Phosphotyrosine. The 124-residue stretch at 1071 to 1194 (DEAFDPFDKS…TGYRAVPLKN (124 aa)) folds into the C2 domain. Phosphoserine is present on residues serine 1222, serine 1228, and serine 1249. At tyrosine 1254 the chain carries Phosphotyrosine. Residue serine 1264 is modified to Phosphoserine. A disordered region spans residues 1271 to 1291 (HFDGRDRRTPRRTRVNGDNRL).

As to quaternary structure, interacts with AGAP2 via its SH3 domain. Interacts (via SH2 domain) with RET. Interacts with FLT1 (tyrosine-phosphorylated). Interacts (via SH2 domain) with FGFR1, FGFR2, FGFR3 and FGFR4 (phosphorylated). Interacts with LAT (phosphorylated) upon TCR activation. Interacts (via SH3 domain) with the Pro-rich domain of TNK1. Associates with BLNK, VAV1, GRB2 and NCK1 in a B-cell antigen receptor-dependent fashion. Interacts with CBLB in activated T-cells; which inhibits phosphorylation. Interacts with SHB. Interacts (via SH3 domain) with the Arg/Gly-rich-flanked Pro-rich domains of KHDRBS1/SAM68. This interaction is selectively regulated by arginine methylation of KHDRBS1/SAM68. Interacts with INPP5D/SHIP1, THEMIS and CLNK. Interacts with AXL, FLT4 and KIT. Interacts with RALGPS1. Interacts (via the SH2 domains) with VIL1 (phosphorylated at C-terminus tyrosine phosphorylation sites). Interacts (via SH2 domain) with PDGFRA and PDGFRB (tyrosine phosphorylated). Interacts with PIP5K1C. Interacts with NTRK1 and NTRK2 (phosphorylated upon ligand-binding). Interacts with SYK; activates PLCG1. Interacts with GRB2, LAT and THEMIS upon TCR activation in thymocytes. Interacts with TESPA1; the association is increased with prolonged stimulation of the TCR and may facilitate the assembly of the LAT signalosome. Interacts (via C-terminal proline-rich domain (PRD)) with PLCG1 (via SH3 domain); this interaction leads to guanine nucleotide exchange from PlCG1 to DNM1 and enhances DNM1-dependent endocytosis. Requires Ca(2+) as cofactor. In terms of processing, ubiquitinated by CBLB in activated T-cells. Post-translationally, tyrosine phosphorylated in response to signaling via activated FLT3, KIT and PDGFRA. Tyrosine phosphorylated by activated FGFR1, FGFR2, FGFR3 and FGFR4. Tyrosine phosphorylated by activated FLT1 and KDR. Tyrosine phosphorylated by activated PDGFRB. The receptor-mediated activation of PLCG1 involves its phosphorylation by tyrosine kinases, in response to ligation of a variety of growth factor receptors and immune system receptors. For instance, SYK phosphorylates and activates PLCG1 in response to ligation of the B-cell receptor. May be dephosphorylated by PTPRJ. Phosphorylated by ITK and TXK on Tyr-783 upon TCR activation in T-cells.

Its subcellular location is the cell projection. The protein resides in the lamellipodium. It is found in the ruffle. The enzyme catalyses a 1,2-diacyl-sn-glycero-3-phospho-(1D-myo-inositol-4,5-bisphosphate) + H2O = 1D-myo-inositol 1,4,5-trisphosphate + a 1,2-diacyl-sn-glycerol + H(+). It catalyses the reaction a 1,2-diacyl-sn-glycero-3-phospho-(1D-myo-inositol) + H2O = 1D-myo-inositol 1-phosphate + a 1,2-diacyl-sn-glycerol + H(+). With respect to regulation, activated by phosphorylation on tyrosine residues. In terms of biological role, mediates the production of the second messenger molecules diacylglycerol (DAG) and inositol 1,4,5-trisphosphate (IP3). Plays an important role in the regulation of intracellular signaling cascades. Becomes activated in response to ligand-mediated activation of receptor-type tyrosine kinases, such as PDGFRA, PDGFRB, EGFR, FGFR1, FGFR2, FGFR3 and FGFR4. Plays a role in actin reorganization and cell migration. Guanine nucleotide exchange factor that binds the GTPase DNM1 and catalyzes the dissociation of GDP, allowing a GTP molecule to bind in its place, therefore enhancing DNM1-dependent endocytosis. The protein is 1-phosphatidylinositol 4,5-bisphosphate phosphodiesterase gamma-1 of Bos taurus (Bovine).